The primary structure comprises 226 residues: Adenosine 5'-phosphosulfate reductase (226 aa).

The [4Fe-4S] cluster site is built by C112, C113, C195, and C198. C221 functions as the Nucleophile; cysteine thiosulfonate intermediate in the catalytic mechanism.

It belongs to the PAPS reductase family. CysH subfamily. [4Fe-4S] cluster is required as a cofactor.

Its subcellular location is the cytoplasm. The catalysed reaction is [thioredoxin]-disulfide + sulfite + AMP + 2 H(+) = adenosine 5'-phosphosulfate + [thioredoxin]-dithiol. The protein operates within sulfur metabolism; hydrogen sulfide biosynthesis; sulfite from sulfate. Functionally, catalyzes the formation of sulfite from adenosine 5'-phosphosulfate (APS) using thioredoxin as an electron donor. This chain is Adenosine 5'-phosphosulfate reductase, found in Bacillus anthracis (strain A0248).